The following is a 476-amino-acid chain: Glutamate--tRNA ligase (476 aa).

Residues 9-19 (PSPTGTLHLGT) carry the 'HIGH' region motif. The 'KMSKS' region signature appears at 248-252 (KLSKR). Lys251 contributes to the ATP binding site.

It belongs to the class-I aminoacyl-tRNA synthetase family. Glutamate--tRNA ligase type 1 subfamily. In terms of assembly, monomer.

It localises to the cytoplasm. The catalysed reaction is tRNA(Glu) + L-glutamate + ATP = L-glutamyl-tRNA(Glu) + AMP + diphosphate. Its function is as follows. Catalyzes the attachment of glutamate to tRNA(Glu) in a two-step reaction: glutamate is first activated by ATP to form Glu-AMP and then transferred to the acceptor end of tRNA(Glu). The chain is Glutamate--tRNA ligase from Prochlorococcus marinus (strain NATL1A).